The following is a 728-amino-acid chain: Catalase-peroxidase 1 (728 aa).

Residues 91–218 constitute a cross-link (tryptophyl-tyrosyl-methioninium (Trp-Tyr) (with M-244)); that stretch reads WHSAGTYRTA…LAAVQMGLIY (128 aa). His-92 (proton acceptor) is an active-site residue. Positions 218–244 form a cross-link, tryptophyl-tyrosyl-methioninium (Tyr-Met) (with W-91); that stretch reads YVNPEGPDGNPDPVAAAHDIRETFARM. Heme b is bound at residue His-259.

The protein belongs to the peroxidase family. Peroxidase/catalase subfamily. In terms of assembly, homodimer or homotetramer. It depends on heme b as a cofactor. Formation of the three residue Trp-Tyr-Met cross-link is important for the catalase, but not the peroxidase activity of the enzyme.

It catalyses the reaction H2O2 + AH2 = A + 2 H2O. The catalysed reaction is 2 H2O2 = O2 + 2 H2O. Functionally, bifunctional enzyme with both catalase and broad-spectrum peroxidase activity. The polypeptide is Catalase-peroxidase 1 (Burkholderia orbicola (strain MC0-3)).